A 521-amino-acid polypeptide reads, in one-letter code: UPF0053 protein BU323 (521 aa).

7 helical membrane-spanning segments follow: residues 13-33, 49-69, 80-100, 125-145, 150-170, 185-205, and 207-227; these read LLTL…FVAI, IGLG…SWIV, FFSL…LLFK, FWAV…DAII, MVNQ…LMLL, VVVL…TEAL, and FCIP…IEIF. CBS domains are found at residues 311–370 and 374–434; these read MTPR…KIDA and SSKI…DADE.

The protein belongs to the UPF0053 family.

It is found in the cell membrane. This Buchnera aphidicola subsp. Acyrthosiphon pisum (strain APS) (Acyrthosiphon pisum symbiotic bacterium) protein is UPF0053 protein BU323.